The following is a 396-amino-acid chain: 8-amino-7-oxononanoate synthase (396 aa).

Residue arginine 19 participates in substrate binding. Position 106–107 (106–107) interacts with pyridoxal 5'-phosphate; the sequence is GY. Histidine 131 contributes to the substrate binding site. Pyridoxal 5'-phosphate is bound by residues serine 176, histidine 204, and threonine 233. Lysine 236 carries the post-translational modification N6-(pyridoxal phosphate)lysine. Threonine 350 provides a ligand contact to substrate.

The protein belongs to the class-II pyridoxal-phosphate-dependent aminotransferase family. BioF subfamily. Homodimer. It depends on pyridoxal 5'-phosphate as a cofactor.

It carries out the reaction 6-carboxyhexanoyl-[ACP] + L-alanine + H(+) = (8S)-8-amino-7-oxononanoate + holo-[ACP] + CO2. The protein operates within cofactor biosynthesis; biotin biosynthesis. Functionally, catalyzes the decarboxylative condensation of pimeloyl-[acyl-carrier protein] and L-alanine to produce 8-amino-7-oxononanoate (AON), [acyl-carrier protein], and carbon dioxide. The protein is 8-amino-7-oxononanoate synthase of Pseudomonas syringae pv. tomato (strain ATCC BAA-871 / DC3000).